The sequence spans 176 residues: MTMCSGARLALLVYGIIMHSSVYSSPAAAGLRFPGIRPEEEAYGEDGNPLPDFDGSEPPGAGSPASAPRAAAAWYRPAGRRDVAHGILNEAYRKVLDQLSAGKHLQSLVARGVGGSLGGGAGDDAEPLSKRHSDGIFTDSYSRYRKQMAVKKYLAAVLGKRYKQRVKNKGRRIAYL.

A signal peptide spans 1–24; it reads MTMCSGARLALLVYGIIMHSSVYS. A propeptide spanning residues 25–79 is cleaved from the precursor; it reads SPAAAGLRFPGIRPEEEAYGEDGNPLPDFDGSEPPGAGSPASAPRAAAAWYRPAG. The disordered stretch occupies residues 39 to 68; the sequence is EEEAYGEDGNPLPDFDGSEPPGAGSPASAP. The span at 56-68 shows a compositional bias: low complexity; it reads SEPPGAGSPASAP. An important for receptor binding region spans residues 150–158; that stretch reads VKKYLAAVL. Leu-158 is subject to Leucine amide. Lys-169 bears the Lysine amide mark. A propeptide spanning residues 173-176 is cleaved from the precursor; that stretch reads IAYL.

Belongs to the glucagon family.

It is found in the secreted. In terms of biological role, PACAP is a neuropeptide involved in diverse array of physiological processes through activating the PACAP subfamily of class B1 G protein-coupled receptors: VIP receptor 1 (VIPR1), VIP receptor 2 (VIPR2), and PACAP type I receptor (ADCYAP1R1). Exerts neuroprotective and general cytoprotective effects due to anti-apoptotic, anti-inflammatory, and antioxidant actions. Promotes neuron projection development through the RAPGEF2/Rap1/B-Raf/ERK pathway. In chromaffin cells, induces long-lasting increase of intracellular calcium concentrations and neuroendocrine secretion. Involved in the control of glucose homeostasis, induces insulin secretion by pancreatic beta cells. PACAP exists in two bioactive forms from proteolysis of the same precursor protein, PACAP27 and PACAP38, which differ by eleven amino acid residues in the C-terminus. The protein is Pituitary adenylate cyclase-activating polypeptide of Homo sapiens (Human).